We begin with the raw amino-acid sequence, 201 residues long: Heat shock protein beta-1 (201 aa).

Position 12 is an omega-N-methylarginine (arginine 12). Serine 15 is modified (phosphoserine; by MAPKAPK2 and MAPKAPK3). The residue at position 27 (serine 27) is a Phosphoserine. Residues 68-201 (AYNRALSRQL…AGKSEQPENK (134 aa)) form an interaction with TGFB1I1 region. One can recognise a sHSP domain in the interval 72-180 (ALSRQLSSGV…QSAEITIPVT (109 aa)). A phosphoserine; by MAPKAPK2, MAPKAPK3 and MAPKAPK5 mark is found at serine 74 and serine 78. Serine 79, serine 82, and serine 94 each carry phosphoserine. Lysine 119 is subject to N6-acetyllysine. The residue at position 170 (threonine 170) is a Phosphothreonine. Serine 172 and serine 195 each carry phosphoserine.

The protein belongs to the small heat shock protein (HSP20) family. Homooligomer. Homodimer; becomes monomeric upon activation. Heterooligomer; with HSPB6. Associates with alpha- and beta-tubulin. Interacts with TGFB1I1. Interacts with CRYAB. Interacts with HSPB8. Interacts with HSPBAP1. Post-translationally, phosphorylated upon exposure to protein kinase C activators and heat shock. Phosphorylation by MAPKAPK2 and MAPKAPK3 in response to stress dissociates HSPB1 from large small heat-shock protein (sHsps) oligomers and impairs its chaperone activity and ability to protect against oxidative stress effectively. Phosphorylation by MAPKAPK5 in response to PKA stimulation induces F-actin rearrangement.

It is found in the cytoplasm. Its subcellular location is the nucleus. It localises to the cytoskeleton. The protein resides in the spindle. In terms of biological role, small heat shock protein which functions as a molecular chaperone probably maintaining denatured proteins in a folding-competent state. Plays a role in stress resistance and actin organization. Through its molecular chaperone activity may regulate numerous biological processes including the phosphorylation and the axonal transport of neurofilament proteins. The chain is Heat shock protein beta-1 (HSPB1) from Bos taurus (Bovine).